A 161-amino-acid chain; its full sequence is uncharacterized protein (161 aa).

2 helical membrane-spanning segments follow: residues 13–35 (VAAVFAALYTSILGLAVLIPHAN) and 40–62 (VFSAVMAAGLGILIALLAVPFIS).

It localises to the cell membrane. This is an uncharacterized protein from Archaeoglobus fulgidus (strain ATCC 49558 / DSM 4304 / JCM 9628 / NBRC 100126 / VC-16).